The following is a 65-amino-acid chain: Large ribosomal subunit protein uL30 (65 aa).

The protein belongs to the universal ribosomal protein uL30 family. As to quaternary structure, part of the 50S ribosomal subunit.

This is Large ribosomal subunit protein uL30 from Aster yellows witches'-broom phytoplasma (strain AYWB).